A 560-amino-acid polypeptide reads, in one-letter code: Formate--tetrahydrofolate ligase (560 aa).

Residue 69–76 participates in ATP binding; it reads TPAGEGKS.

Belongs to the formate--tetrahydrofolate ligase family.

It catalyses the reaction (6S)-5,6,7,8-tetrahydrofolate + formate + ATP = (6R)-10-formyltetrahydrofolate + ADP + phosphate. It participates in one-carbon metabolism; tetrahydrofolate interconversion. In Listeria welshimeri serovar 6b (strain ATCC 35897 / DSM 20650 / CCUG 15529 / CIP 8149 / NCTC 11857 / SLCC 5334 / V8), this protein is Formate--tetrahydrofolate ligase.